The primary structure comprises 208 residues: Interleukin-6 (208 aa).

An N-terminal signal peptide occupies residues 1-29 (MNSRFTSAFTPFAVSLGLLLVMTSAFPTP). The N-linked (GlcNAc...) asparagine glycan is linked to Asn-38. Cys-72 and Cys-78 form a disulfide bridge. Ser-81 carries the phosphoserine modification. Cysteines 101 and 111 form a disulfide.

This sequence belongs to the IL-6 superfamily. Component of a hexamer of two molecules each of IL6, IL6R and IL6ST; first binds to IL6R to associate with the signaling subunit IL6ST. Interacts with IL6R (via the N-terminal ectodomain); this interaction may be affected by IL6R-binding with SORL1, hence decreasing IL6 cis signaling. Interacts with SORL1 (via the N-terminal ectodomain); this interaction leads to IL6 internalization and lysosomal degradation. May form a trimeric complex with the soluble SORL1 ectodomain and soluble IL6R receptor; this interaction might stabilize circulating IL6, hence promoting IL6 trans signaling.

It is found in the secreted. Functionally, cytokine with a wide variety of biological functions in immunity, tissue regeneration, and metabolism. Binds to IL6R, then the complex associates to the signaling subunit IL6ST/gp130 to trigger the intracellular IL6-signaling pathway. The interaction with the membrane-bound IL6R and IL6ST stimulates 'classic signaling', whereas the binding of IL6 and soluble IL6R to IL6ST stimulates 'trans-signaling'. Alternatively, 'cluster signaling' occurs when membrane-bound IL6:IL6R complexes on transmitter cells activate IL6ST receptors on neighboring receiver cells. Its function is as follows. IL6 is a potent inducer of the acute phase response. Rapid production of IL6 contributes to host defense during infection and tissue injury, but excessive IL6 synthesis is involved in disease pathology. In the innate immune response, is synthesized by myeloid cells, such as macrophages and dendritic cells, upon recognition of pathogens through toll-like receptors (TLRs) at the site of infection or tissue injury. In the adaptive immune response, is required for the differentiation of B cells into immunoglobulin-secreting cells. Plays a major role in the differentiation of CD4(+) T cell subsets. Essential factor for the development of T follicular helper (Tfh) cells that are required for the induction of germinal-center formation. Required to drive naive CD4(+) T cells to the Th17 lineage. Also required for proliferation of myeloma cells and the survival of plasmablast cells. In terms of biological role, acts as an essential factor in bone homeostasis and on vessels directly or indirectly by induction of VEGF, resulting in increased angiogenesis activity and vascular permeability. Induces, through 'trans-signaling' and synergistically with IL1B and TNF, the production of VEGF. Involved in metabolic controls, is discharged into the bloodstream after muscle contraction increasing lipolysis and improving insulin resistance. 'Trans-signaling' in central nervous system also regulates energy and glucose homeostasis. Mediates, through GLP-1, crosstalk between insulin-sensitive tissues, intestinal L cells and pancreatic islets to adapt to changes in insulin demand. Also acts as a myokine. Plays a protective role during liver injury, being required for maintenance of tissue regeneration. Also has a pivotal role in iron metabolism by regulating HAMP/hepcidin expression upon inflammation or bacterial infection. Through activation of IL6ST-YAP-NOTCH pathway, induces inflammation-induced epithelial regeneration. In Bos taurus (Bovine), this protein is Interleukin-6 (IL6).